The chain runs to 255 residues: MTLTIKEVTQLINAVNTIEELENHECFLDERKGVQNAIARRRKALEKEQALKEKYVEMTYFENEILTENPNAIICGIDEVGRGPLAGPVVACATILNSNHNYLGLDDSKKVPVTKRLELNEALKNEVTAFAYGIATAEEIDEFNIYKATQIAMQRAIDGLSVQPTHLLIDAMTLDNALPQVSLIKGDARSVSIAAASIMAKVFRDDYMTQLSKDYPEYGFEKNAGYGTKQHLLAIDDIGIMKEHRKSFEPIKSLL.

One can recognise an RNase H type-2 domain in the interval 72 to 255; the sequence is AIICGIDEVG…KSFEPIKSLL (184 aa). Residues D78, E79, and D170 each contribute to the a divalent metal cation site.

It belongs to the RNase HII family. Mn(2+) serves as cofactor. Requires Mg(2+) as cofactor.

Its subcellular location is the cytoplasm. It carries out the reaction Endonucleolytic cleavage to 5'-phosphomonoester.. Endonuclease that specifically degrades the RNA of RNA-DNA hybrids. The polypeptide is Ribonuclease HII (Staphylococcus aureus (strain MRSA252)).